The chain runs to 360 residues: Phospho-N-acetylmuramoyl-pentapeptide-transferase (360 aa).

Helical transmembrane passes span 27–47 (GALITAAFIVFLFGPAIISSL), 70–90 (GTPTMGGLMIFSGILGSSILW), 93–113 (LSSVYVWVVLMVMVGFGAIGF), 134–154 (LALEFVIAGFAAWIIMSAGQE), 168–188 (LLLNLGIFFIPFAAFVIVGAG), 205–225 (VMVAAASFGVIAYLSGNAIFA), 239–259 (LSVILGAVIGAGLGFLWFNAP), 262–282 (AIFMGDTGSLALGGLIGTVAV), 288–308 (IVLAIIGGLFVIEILSVIIQV), and 337–357 (QVVIRFWIIAVVLALIGLSTL).

This sequence belongs to the glycosyltransferase 4 family. MraY subfamily. Mg(2+) serves as cofactor.

Its subcellular location is the cell inner membrane. The enzyme catalyses UDP-N-acetyl-alpha-D-muramoyl-L-alanyl-gamma-D-glutamyl-meso-2,6-diaminopimeloyl-D-alanyl-D-alanine + di-trans,octa-cis-undecaprenyl phosphate = di-trans,octa-cis-undecaprenyl diphospho-N-acetyl-alpha-D-muramoyl-L-alanyl-D-glutamyl-meso-2,6-diaminopimeloyl-D-alanyl-D-alanine + UMP. It participates in cell wall biogenesis; peptidoglycan biosynthesis. Catalyzes the initial step of the lipid cycle reactions in the biosynthesis of the cell wall peptidoglycan: transfers peptidoglycan precursor phospho-MurNAc-pentapeptide from UDP-MurNAc-pentapeptide onto the lipid carrier undecaprenyl phosphate, yielding undecaprenyl-pyrophosphoryl-MurNAc-pentapeptide, known as lipid I. This is Phospho-N-acetylmuramoyl-pentapeptide-transferase from Chelativorans sp. (strain BNC1).